The chain runs to 37 residues: Cytochrome b6-f complex subunit 5 (37 aa).

Residues 5-25 (LLSGIVLGLIPITLAGLFVTA) traverse the membrane as a helical segment.

This sequence belongs to the PetG family. In terms of assembly, the 4 large subunits of the cytochrome b6-f complex are cytochrome b6, subunit IV (17 kDa polypeptide, PetD), cytochrome f and the Rieske protein, while the 4 small subunits are PetG, PetL, PetM and PetN. The complex functions as a dimer.

Its subcellular location is the plastid. It localises to the chloroplast thylakoid membrane. Its function is as follows. Component of the cytochrome b6-f complex, which mediates electron transfer between photosystem II (PSII) and photosystem I (PSI), cyclic electron flow around PSI, and state transitions. PetG is required for either the stability or assembly of the cytochrome b6-f complex. The chain is Cytochrome b6-f complex subunit 5 from Chara vulgaris (Common stonewort).